Here is a 1391-residue protein sequence, read N- to C-terminus: DNA-directed RNA polymerase subunit beta (1391 aa).

It belongs to the RNA polymerase beta chain family. The RNAP catalytic core consists of 2 alpha, 1 beta, 1 beta' and 1 omega subunit. When a sigma factor is associated with the core the holoenzyme is formed, which can initiate transcription.

It catalyses the reaction RNA(n) + a ribonucleoside 5'-triphosphate = RNA(n+1) + diphosphate. Functionally, DNA-dependent RNA polymerase catalyzes the transcription of DNA into RNA using the four ribonucleoside triphosphates as substrates. The sequence is that of DNA-directed RNA polymerase subunit beta from Granulibacter bethesdensis (strain ATCC BAA-1260 / CGDNIH1).